The chain runs to 367 residues: UDP-N-acetylglucosamine--N-acetylmuramyl-(pentapeptide) pyrophosphoryl-undecaprenol N-acetylglucosamine transferase (367 aa).

Residues 13-15, asparagine 127, arginine 168, serine 200, isoleucine 251, and glutamine 296 contribute to the UDP-N-acetyl-alpha-D-glucosamine site; that span reads TGG.

The protein belongs to the glycosyltransferase 28 family. MurG subfamily.

It localises to the cell inner membrane. It catalyses the reaction di-trans,octa-cis-undecaprenyl diphospho-N-acetyl-alpha-D-muramoyl-L-alanyl-D-glutamyl-meso-2,6-diaminopimeloyl-D-alanyl-D-alanine + UDP-N-acetyl-alpha-D-glucosamine = di-trans,octa-cis-undecaprenyl diphospho-[N-acetyl-alpha-D-glucosaminyl-(1-&gt;4)]-N-acetyl-alpha-D-muramoyl-L-alanyl-D-glutamyl-meso-2,6-diaminopimeloyl-D-alanyl-D-alanine + UDP + H(+). The protein operates within cell wall biogenesis; peptidoglycan biosynthesis. Cell wall formation. Catalyzes the transfer of a GlcNAc subunit on undecaprenyl-pyrophosphoryl-MurNAc-pentapeptide (lipid intermediate I) to form undecaprenyl-pyrophosphoryl-MurNAc-(pentapeptide)GlcNAc (lipid intermediate II). This chain is UDP-N-acetylglucosamine--N-acetylmuramyl-(pentapeptide) pyrophosphoryl-undecaprenol N-acetylglucosamine transferase, found in Flavobacterium psychrophilum (strain ATCC 49511 / DSM 21280 / CIP 103535 / JIP02/86).